The primary structure comprises 592 residues: Aspartate--tRNA ligase (592 aa).

An L-aspartate-binding site is contributed by Glu171. The segment at 195-198 is aspartate; that stretch reads QLFK. Position 217 (Arg217) interacts with L-aspartate. ATP-binding positions include 217 to 219 and Gln226; that span reads RDE. L-aspartate is bound at residue His448. Glu482 serves as a coordination point for ATP. Position 489 (Arg489) interacts with L-aspartate. Position 534-537 (534-537) interacts with ATP; the sequence is GLDR.

This sequence belongs to the class-II aminoacyl-tRNA synthetase family. Type 1 subfamily. In terms of assembly, homodimer.

The protein localises to the cytoplasm. The catalysed reaction is tRNA(Asp) + L-aspartate + ATP = L-aspartyl-tRNA(Asp) + AMP + diphosphate. Its function is as follows. Catalyzes the attachment of L-aspartate to tRNA(Asp) in a two-step reaction: L-aspartate is first activated by ATP to form Asp-AMP and then transferred to the acceptor end of tRNA(Asp). In Vibrio atlanticus (strain LGP32) (Vibrio splendidus (strain Mel32)), this protein is Aspartate--tRNA ligase.